The primary structure comprises 167 residues: Small ribosomal subunit protein uS5 (167 aa).

Residues 12–75 form the S5 DRBM domain; sequence LQEKLITVNR…EKARRNMVTI (64 aa).

This sequence belongs to the universal ribosomal protein uS5 family. As to quaternary structure, part of the 30S ribosomal subunit. Contacts proteins S4 and S8.

With S4 and S12 plays an important role in translational accuracy. Its function is as follows. Located at the back of the 30S subunit body where it stabilizes the conformation of the head with respect to the body. This Buchnera aphidicola subsp. Schizaphis graminum (strain Sg) protein is Small ribosomal subunit protein uS5.